The chain runs to 153 residues: Histone H2B.6 (153 aa).

Basic and acidic residues-rich tracts occupy residues 1-28 (MAPK…EKAP) and 36-53 (EKRL…EGKK). Positions 1–60 (MAPKAEKKPAAKKPAEEEPAAEKAEKAPAGKKPKAEKRLPAGKGEKGSGEGKKAGRKKGK) are disordered. N6-acetyllysine occurs at positions 7 and 37. Lysine 149 is covalently cross-linked (Glycyl lysine isopeptide (Lys-Gly) (interchain with G-Cter in ubiquitin)).

Belongs to the histone H2B family. The nucleosome is a histone octamer containing two molecules each of H2A, H2B, H3 and H4 assembled in one H3-H4 heterotetramer and two H2A-H2B heterodimers. The octamer wraps approximately 147 bp of DNA. Post-translationally, can be acetylated to form H2BK6ac and H2BK33ac. In terms of processing, monoubiquitinated by BRE1 to form H2BK143ub1 and deubiquitinated by UBP26. Required for heterochromatic histone H3 di- and trimethylation at H3K4me. May give a specific tag for epigenetic transcriptional activation.

The protein resides in the nucleus. It is found in the chromosome. Core component of nucleosome. Nucleosomes wrap and compact DNA into chromatin, limiting DNA accessibility to the cellular machineries which require DNA as a template. Histones thereby play a central role in transcription regulation, DNA repair, DNA replication and chromosomal stability. DNA accessibility is regulated via a complex set of post-translational modifications of histones, also called histone code, and nucleosome remodeling. This is Histone H2B.6 (H2B.6) from Oryza sativa subsp. japonica (Rice).